A 917-amino-acid polypeptide reads, in one-letter code: Methionine--tRNA ligase, cytoplasmic (917 aa).

The 'HIGH' region motif lies at 44-54 (PYVNNVPHLGN). Residues 367–371 (KFSKS) carry the 'KMSKS' region motif. An ATP-binding site is contributed by lysine 370. Disordered regions lie at residues 591 to 623 (GSQD…GDKK) and 702 to 749 (SCTP…AAAA). Positions 614-623 (PTKDKKGDKK) are enriched in basic and acidic residues. Residues 702–713 (SCTPTPTSTPAS) show a composition bias toward low complexity. Positions 732 to 741 (EPKKAKEQKK) are enriched in basic and acidic residues. Residues 756-857 (DVGRLDMRVG…ADSKPGTPVV (102 aa)) enclose the tRNA-binding domain.

This sequence belongs to the class-I aminoacyl-tRNA synthetase family.

It localises to the cytoplasm. It catalyses the reaction tRNA(Met) + L-methionine + ATP = L-methionyl-tRNA(Met) + AMP + diphosphate. This is Methionine--tRNA ligase, cytoplasmic from Caenorhabditis elegans.